The chain runs to 331 residues: UPF0329 protein ECU01_0080/ECU01_1530/ECU02_1560/ECU04_0090/ECU08_0010/ECU08_2090 (331 aa).

Residues 305-320 (QRSEMEKRDREQDPER) show a composition bias toward basic and acidic residues. The interval 305-331 (QRSEMEKRDREQDPERRRLRARRVGSL) is disordered. Over residues 321–331 (RRLRARRVGSL) the composition is skewed to basic residues.

It belongs to the UPF0329 family.

The sequence is that of UPF0329 protein ECU01_0080/ECU01_1530/ECU02_1560/ECU04_0090/ECU08_0010/ECU08_2090 from Encephalitozoon cuniculi (strain GB-M1) (Microsporidian parasite).